A 471-amino-acid chain; its full sequence is Citrate synthase, mitochondrial (471 aa).

The transit peptide at 1 to 18 (MASLRSATALSRLRSRAG) directs the protein to the mitochondrion. Catalysis depends on residues histidine 307, histidine 353, and aspartate 408.

This sequence belongs to the citrate synthase family. In terms of assembly, homodimer.

It is found in the mitochondrion matrix. It carries out the reaction oxaloacetate + acetyl-CoA + H2O = citrate + CoA + H(+). Its pathway is carbohydrate metabolism; tricarboxylic acid cycle; isocitrate from oxaloacetate: step 1/2. The protein is Citrate synthase, mitochondrial (CIT) of Citrus maxima (Pomelo).